We begin with the raw amino-acid sequence, 101 residues long: Small ribosomal subunit protein uS14 (101 aa).

It belongs to the universal ribosomal protein uS14 family. As to quaternary structure, part of the 30S ribosomal subunit. Contacts proteins S3 and S10.

Its function is as follows. Binds 16S rRNA, required for the assembly of 30S particles and may also be responsible for determining the conformation of the 16S rRNA at the A site. The protein is Small ribosomal subunit protein uS14 of Shewanella sp. (strain ANA-3).